A 234-amino-acid polypeptide reads, in one-letter code: Leucyl/phenylalanyl-tRNA--protein transferase (234 aa).

Belongs to the L/F-transferase family.

It localises to the cytoplasm. It catalyses the reaction N-terminal L-lysyl-[protein] + L-leucyl-tRNA(Leu) = N-terminal L-leucyl-L-lysyl-[protein] + tRNA(Leu) + H(+). The catalysed reaction is N-terminal L-arginyl-[protein] + L-leucyl-tRNA(Leu) = N-terminal L-leucyl-L-arginyl-[protein] + tRNA(Leu) + H(+). It carries out the reaction L-phenylalanyl-tRNA(Phe) + an N-terminal L-alpha-aminoacyl-[protein] = an N-terminal L-phenylalanyl-L-alpha-aminoacyl-[protein] + tRNA(Phe). Functions in the N-end rule pathway of protein degradation where it conjugates Leu, Phe and, less efficiently, Met from aminoacyl-tRNAs to the N-termini of proteins containing an N-terminal arginine or lysine. The protein is Leucyl/phenylalanyl-tRNA--protein transferase of Salmonella arizonae (strain ATCC BAA-731 / CDC346-86 / RSK2980).